The primary structure comprises 147 residues: Methylmalonyl-CoA mutase homolog (147 aa).

It to methylmalonyl-CoA mutase.

The polypeptide is Methylmalonyl-CoA mutase homolog (Alkalihalophilus pseudofirmus (strain ATCC BAA-2126 / JCM 17055 / OF4) (Bacillus pseudofirmus)).